The sequence spans 391 residues: Ferrochelatase (391 aa).

2 residues coordinate Fe cation: histidine 196 and glutamate 281.

The protein belongs to the ferrochelatase family.

Its subcellular location is the cytoplasm. It carries out the reaction heme b + 2 H(+) = protoporphyrin IX + Fe(2+). It functions in the pathway porphyrin-containing compound metabolism; protoheme biosynthesis; protoheme from protoporphyrin-IX: step 1/1. Functionally, catalyzes the ferrous insertion into protoporphyrin IX. The protein is Ferrochelatase of Prochlorococcus marinus (strain SARG / CCMP1375 / SS120).